We begin with the raw amino-acid sequence, 1068 residues long: Huntingtin-interacting protein 1-related protein (1068 aa).

Met1 bears the N-acetylmethionine mark. Positions 23 to 151 constitute an ENTH domain; it reads EREQFDKTQA…SFHLKHPQFP (129 aa). A coiled-coil region spans residues 347–599; sequence SVKDDRDLQI…RSSQEQGELQ (253 aa). Disordered regions lie at residues 424 to 443, 529 to 549, and 582 to 608; these read LEGE…ASAT, ARAQ…SSRL, and AALS…RESQ. Composition is skewed to basic and acidic residues over residues 425–443 and 539–549; these read EGER…ASAT and EQSKSELSSRL. Over residues 590-600 the composition is skewed to low complexity; the sequence is RSSQEQGELQG. The region spanning 771–1012 is the I/LWEQ domain; it reads SLDVRQEELG…ELRKQHYVLA (242 aa). The segment at 867 to 924 is important for actin binding; it reads RWTEGLISASKAVGWGATQLVEAADKVVLHTGKYEELIVCSHEIAASTAQLVAASKVK. A disordered region spans residues 1016 to 1060; the sequence is GSPGEEVAIRPSTAPRSVTTKKPPLAQKPSVAPRQDHQLDKKDGI. Phosphoserine is present on Ser1017. Positions 1049–1059 are enriched in basic and acidic residues; the sequence is RQDHQLDKKDG.

Belongs to the SLA2 family. As to quaternary structure, homodimer. Interacts with actin; homodimerization promotes actin binding. Interacts with CLTB. Interacts with HIP1. Interacts (via ENTH and I/LWEQ domains) with BCL2L10. Brain, heart, kidney, pancreas, and liver, but not in lung or placenta.

It is found in the cytoplasm. Its subcellular location is the perinuclear region. It localises to the endomembrane system. The protein resides in the cytoplasmic vesicle. The protein localises to the clathrin-coated vesicle membrane. In terms of biological role, component of clathrin-coated pits and vesicles, that may link the endocytic machinery to the actin cytoskeleton. Binds 3-phosphoinositides (via ENTH domain). May act through the ENTH domain to promote cell survival by stabilizing receptor tyrosine kinases following ligand-induced endocytosis. This Homo sapiens (Human) protein is Huntingtin-interacting protein 1-related protein (HIP1R).